A 559-amino-acid chain; its full sequence is Polypeptide N-acetylgalactosaminyltransferase 1 (559 aa).

The Cytoplasmic portion of the chain corresponds to 1 to 8 (MRKFAYCK). Residues 9–28 (VVLATSLIWVLLDMFLLLYF) traverse the membrane as a helical; Signal-anchor for type II membrane protein segment. Residues 29 to 559 (SECNKCDEKK…LRNVTLPEIF (531 aa)) are Lumenal-facing. The interval 45 to 66 (GDVLEPVQKPHEGPGEMGKPVV) is disordered. Residue Asn-95 is glycosylated (N-linked (GlcNAc...) asparagine). 5 disulfide bridges follow: Cys-106–Cys-339, Cys-330–Cys-408, Cys-442–Cys-459, Cys-482–Cys-497, and Cys-523–Cys-540. The segment at 115-225 (LPTTSVVIVF…VGWLEPLLAR (111 aa)) is catalytic subdomain A. Positions 156 and 186 each coordinate substrate. Mn(2+) contacts are provided by Asp-209 and His-211. Residues 285–347 (PVRTPTMAGG…TCSHVGHVFR (63 aa)) form a catalytic subdomain B region. Residue Trp-316 participates in substrate binding. His-344 contributes to the Mn(2+) binding site. Residues Arg-347 and Tyr-352 each coordinate substrate. In terms of domain architecture, Ricin B-type lectin spans 429-551 (SSLGEIRNVE…GSRSQQWLLR (123 aa)). Asn-552 carries N-linked (GlcNAc...) asparagine glycosylation.

It belongs to the glycosyltransferase 2 family. GalNAc-T subfamily. The cofactor is Mn(2+).

The protein localises to the golgi apparatus. It localises to the golgi stack membrane. The protein resides in the secreted. The enzyme catalyses L-seryl-[protein] + UDP-N-acetyl-alpha-D-galactosamine = a 3-O-[N-acetyl-alpha-D-galactosaminyl]-L-seryl-[protein] + UDP + H(+). It catalyses the reaction L-threonyl-[protein] + UDP-N-acetyl-alpha-D-galactosamine = a 3-O-[N-acetyl-alpha-D-galactosaminyl]-L-threonyl-[protein] + UDP + H(+). The protein operates within protein modification; protein glycosylation. Functionally, catalyzes the initial reaction in O-linked oligosaccharide biosynthesis, the transfer of an N-acetyl-D-galactosamine residue to a serine or threonine residue on the protein receptor. Has a broad spectrum of substrates such as apomucin-, MUC5AC-, MUC1- and MUC2-derived peptides. This Sus scrofa (Pig) protein is Polypeptide N-acetylgalactosaminyltransferase 1.